We begin with the raw amino-acid sequence, 747 residues long: MRSLTAAARRPEVLLLLLCILQPSQPGGVPGAVPGGVPGGVFFPGAGLGGLGVGGLGPGVKPAKPGVGGLVGPGLGAEGSALPGAFPGGFFGAGGGAAGAAAAYKAAAKAGAAGLGVGGIGGVGGLGVSTGAVVPQLGAGVGAGVKPGKVPGVGLPGVYPGGVLPGAGARFPGIGVLPGVPTGAGVKPKAQVGAGAFAGIPGVGPFGGQQPGLPLGYPIKAPKLPAGYGLPYKTGKLPYGFGPGGVAGSAGKAGYPTGTGVGPQAAAAAAKAAAKLGAGGAGVLPGVGVGGPGIPGAPGAIPGIGGIAGVGAPDAAAAAAAAAKAAKFGAAGGLPGVGVPGVGVPGVGVPGVGVPGVGVPGVGVPGVGVPGVGVPGVGVPGVGVPGVGVPGALSPAATAKAAAKAAKFGARGAVGIGGIPTFGLGPGGFPGIGDAAAAPAAAAAKAAKIGAGGVGALGGVVPGAPGAIPGLPGVGGVPGVGIPAAAAAKAAAKAAQFGLGPGVGVAPGVGVVPGVGVVPGVGVAPGIGLGPGGVIGAGVPAAAKSAAKAAAKAQFRAAAGLPAGVPGLGVGAGVPGLGVGAGVPGLGVGAGVPGPGAVPGTLAAAKAAKFGPGGVGALGGVGDLGGAGIPGGVAGVVPAAAAAAKAAAKAAQFGLGGVGGLGVGGLGAVPGAVGLGGVSPAAAAKAAKFGAAGLGGVLGAGQPFPIGGGAGGLGVGGKPPKPFGGALGALGFPGGACLGKSCGRKRK.

The signal sequence occupies residues 1 to 26; it reads MRSLTAAARRPEVLLLLLCILQPSQP. Residues Pro34, Pro65, and Pro87 each carry the 4-hydroxyproline modification. 2 positions are modified to allysine: Lys105 and Lys109. 4-hydroxyproline is present on residues Pro165, Pro178, and Pro181. Position 188 is a hydroxyproline (Pro188). At Pro201 the chain carries 4-hydroxyproline. 3 positions are modified to allysine: Lys252, Lys271, and Lys275. 4-hydroxyproline occurs at positions 298 and 302. Allysine is present on residues Lys324 and Lys327. 4-hydroxyproline occurs at positions 335, 365, 370, 375, 380, and 385. 5 positions are modified to allysine: Lys400, Lys404, Lys407, Lys445, and Lys448. 4-hydroxyproline occurs at positions 462 and 478. Allysine is present on residues Lys489 and Lys493. Pro513 carries the 4-hydroxyproline modification. Residues Lys544, Lys548, and Lys552 each carry the allysine modification. 4-hydroxyproline occurs at positions 566, 575, 584, 593, and 599. Allysine is present on residues Lys606 and Lys609. Pro630 carries the post-translational modification 4-hydroxyproline. An allysine mark is found at Lys645, Lys649, Lys685, and Lys688. Pro719 and Pro733 each carry 4-hydroxyproline. An intrachain disulfide couples Cys737 to Cys742.

It belongs to the elastin family. In terms of assembly, the polymeric elastin chains are cross-linked together into an extensible 3D network. Forms a ternary complex with BGN and MFAP2. Interacts with MFAP2 via divalent cations (calcium &gt; magnesium &gt; manganese) in a dose-dependent and saturating manner. Interacts with FBLN5 and FBN1. Forms a ternary complex with FBN1 and FBLN2 or FBLN5. Interacts with MFAP4 in a Ca (2+)-dependent manner; this interaction promotes ELN self-assembly. Interacts with EFEMP2 with moderate affinity. Elastin is formed through the cross-linking of its soluble precursor tropoelastin. Cross-linking is initiated through the action of lysyl oxidase on exposed lysines to form allysine. Subsequent spontaneous condensation reactions with other allysine or unmodified lysine residues result in various bi-, tri-, and tetrafunctional cross-links. The most abundant cross-links in mature elastin fibers are lysinonorleucine, allysine aldol, desmosine, and isodesmosine. Post-translationally, hydroxylation on proline residues within the sequence motif, GXPG, is most likely to be 4-hydroxy as this fits the requirement for 4-hydroxylation in vertebrates.

It is found in the secreted. The protein localises to the extracellular space. Its subcellular location is the extracellular matrix. Major structural protein of tissues such as aorta and nuchal ligament, which must expand rapidly and recover completely. Molecular determinant of the late arterial morphogenesis, stabilizing arterial structure by regulating proliferation and organization of vascular smooth muscle. The protein is Elastin (ELN) of Bos taurus (Bovine).